Reading from the N-terminus, the 272-residue chain is Putative esterase/lipase 3 (272 aa).

Histidine 34 is a catalytic residue. The active-site Charge relay system is the serine 100.

Belongs to the lipase/esterase LIP3/BchO family.

In Mycoplasma pneumoniae (strain ATCC 29342 / M129 / Subtype 1) (Mycoplasmoides pneumoniae), this protein is Putative esterase/lipase 3.